Reading from the N-terminus, the 398-residue chain is Secreted aspartic protease 3 (398 aa).

The first 18 residues, 1–18, serve as a signal peptide directing secretion; sequence MFLKNIFIALAIALLADA. The propeptide at 19-58 is activation peptide; that stretch reads TPTTFNNSPGFVALNFDVIKTHKNVTGPQGEINTNVNVKR. A glycan (N-linked (GlcNAc...) asparagine) is linked at Asn42. Residues 72–384 enclose the Peptidase A1 domain; the sequence is YASDITVGSN…DLDDNEISLA (313 aa). The active site involves Asp90. 90–92 contacts pepstatin A; it reads DTG. Residues 103–112 show a composition bias toward polar residues; sequence VSCQAGQGQD. Positions 103–139 are disordered; it reads VSCQAGQGQDPNFCKNEGTYSPSSSSSSQNLNSPFSI. A disulfide bond links Cys105 and Cys116. A compositionally biased stretch (low complexity) spans 123–138; it reads SPSSSSSSQNLNSPFS. Residue 140-143 participates in pepstatin A binding; it reads EYGD. 4 residues coordinate Zn(2+): His188, Asp248, His254, and Asp270. Residue Asp274 is part of the active site. 274 to 278 serves as a coordination point for pepstatin A; the sequence is DSGTT. A disulfide bond links Cys312 and Cys350. Asn313 is a glycosylation site (N-linked (GlcNAc...) asparagine).

This sequence belongs to the peptidase A1 family. In terms of assembly, monomer.

The protein localises to the secreted. It carries out the reaction Preferential cleavage at the carboxyl of hydrophobic amino acids, but fails to cleave 15-Leu-|-Tyr-16, 16-Tyr-|-Leu-17 and 24-Phe-|-Phe-25 of insulin B chain. Activates trypsinogen, and degrades keratin.. With respect to regulation, inhibited by pepstatin A analogs. Its function is as follows. Secreted aspartic peptidases (SAPs) are a group of ten acidic hydrolases considered as key virulence factors. These enzymes supply the fungus with nutrient amino acids as well as are able to degrade the selected host's proteins involved in the immune defense. Induces host inflammatory cytokine production in a proteolytic activity-independent way. Moreover, acts toward human hemoglobin though limited proteolysis to generate a variety of antimicrobial hemocidins, enabling to compete with the other microorganisms of the same physiological niche using the microbicidal peptides generated from the host protein. Functionally, plays a key role in defense against host by cleaving histatin-5 (Hst 5), a peptide from human saliva that carries out fungicidal activity. The cleavage rate decreases in an order of SAP2 &gt; SAP9 &gt; SAP3 &gt; SAP7 &gt; SAP4 &gt; SAP1 &gt; SAP8. The first cleavage occurs between residues 'Lys-17' and 'His-18' of Hst 5, giving DSHAKRHHGYKRKFHEK and HHSHRGY peptides. Simultaneously, the DSHAKRHHGYKRK peptide is also formed. Further fragmentation by SAP3 results in DSHAKRHHGY and KRKFHEK products. In Candida albicans (strain SC5314 / ATCC MYA-2876) (Yeast), this protein is Secreted aspartic protease 3.